The following is a 483-amino-acid chain: Aspartyl/glutamyl-tRNA(Asn/Gln) amidotransferase subunit B (483 aa).

Belongs to the GatB/GatE family. GatB subfamily. Heterotrimer of A, B and C subunits.

It catalyses the reaction L-glutamyl-tRNA(Gln) + L-glutamine + ATP + H2O = L-glutaminyl-tRNA(Gln) + L-glutamate + ADP + phosphate + H(+). It carries out the reaction L-aspartyl-tRNA(Asn) + L-glutamine + ATP + H2O = L-asparaginyl-tRNA(Asn) + L-glutamate + ADP + phosphate + 2 H(+). In terms of biological role, allows the formation of correctly charged Asn-tRNA(Asn) or Gln-tRNA(Gln) through the transamidation of misacylated Asp-tRNA(Asn) or Glu-tRNA(Gln) in organisms which lack either or both of asparaginyl-tRNA or glutaminyl-tRNA synthetases. The reaction takes place in the presence of glutamine and ATP through an activated phospho-Asp-tRNA(Asn) or phospho-Glu-tRNA(Gln). This Thermomicrobium roseum (strain ATCC 27502 / DSM 5159 / P-2) protein is Aspartyl/glutamyl-tRNA(Asn/Gln) amidotransferase subunit B.